The primary structure comprises 131 residues: Small ribosomal subunit protein uS8 (131 aa).

The protein belongs to the universal ribosomal protein uS8 family. Part of the 30S ribosomal subunit. Contacts proteins S5 and S12.

Functionally, one of the primary rRNA binding proteins, it binds directly to 16S rRNA central domain where it helps coordinate assembly of the platform of the 30S subunit. The polypeptide is Small ribosomal subunit protein uS8 (Paracidovorax citrulli (strain AAC00-1) (Acidovorax citrulli)).